The following is a 157-amino-acid chain: Galactose-specific lectin (157 aa).

The 146-residue stretch at 12 to 157 (SIVVGTWGAE…LDYIGFHLAL (146 aa)) folds into the Jacalin-type lectin domain. N45 carries an N-linked (GlcNAc...) asparagine glycan.

Belongs to the jacalin lectin family. In terms of assembly, tetramer of heterodimers of light and heavy chains which are non-covalently linked. In terms of processing, N-linked carbohydrates at Asn-45 can be of complex or paucimannose type.

Alpha-D-galactose-specific lectin. Has hemagglutinating activity towards human and rabbit erythrocytes. Is highly cytotoxic to human cells in vitro. The chain is Galactose-specific lectin from Morus indica (Mulberry).